The chain runs to 716 residues: MAKMRVYEYAKAINVSSKDIIAALKDMNIEVNNHMAMIEENAIKQLDQKFKKSAKPAGNKKDAGTGGQKPQQEAAKLNAGSKPNKNRDGKKNNVQNTQFNNKNKKKNNNNKKNKRGKNHQSPQEKQFKPKKELPEKIEFTNSMSVGALAEELGKEPSEIIKKLMLLGIMATINQDLDKDTVELIASEYGVEVEEVIVHEETEFEKYEEPDNEEDLEIRPPVVTIMGHVDHGKTTLLDSIRKTKVVEGEAGGITQHIGAYQIEENGKKITFLDTPGHAAFTTMRARGAEVTDITILVVAADDGVMPQTVEAINHAKAAEVPIIVAVNKIDKPTANPDRVMQELTEHGLVPEAWGGETIFVPLSALSGEGIDELIEMILLVSEVEELKANPNRRAKGTVIEAELDKGKGSVATLLVQNGTLHVGDPIVVGNTFGRVRAMVNDVGRRVKSAGPSTPVEITGLNEVPNAGDQFLVFKDEKTARSVGEARATKQLEEQRSDKAKLSLDDLFEQIKQGDVKEINLVVKADVQGSVEALAAALQKIEVEGVRVKIIHTGVGAITESDIILASASNAIVIGFNVRPDGNAKSTAEAENVDIRLHRIIYKVIDEIEAAMKGMLDPEYEEKVIGMVEVRQTFKVSKIGTIAGGYVTEGTITRDSGIRLIRDGVVIFEGEVDVLKRFKDDVKEVSQGYECGITIKKYNDIREGDMIEAYVMQEIERK.

Positions 50 to 137 (FKKSAKPAGN…KPKKELPEKI (88 aa)) are disordered. A compositionally biased stretch (low complexity) spans 92-101 (NNVQNTQFNN). Basic residues predominate over residues 102-118 (KNKKKNNNNKKNKRGKN). A compositionally biased stretch (basic and acidic residues) spans 125 to 137 (KQFKPKKELPEKI). Residues 217-386 (IRPPVVTIMG…LLVSEVEELK (170 aa)) enclose the tr-type G domain. The interval 226-233 (GHVDHGKT) is G1. 226-233 (GHVDHGKT) contributes to the GTP binding site. Residues 251 to 255 (GITQH) form a G2 region. Residues 272–275 (DTPG) form a G3 region. GTP-binding positions include 272 to 276 (DTPGH) and 326 to 329 (NKID). The segment at 326–329 (NKID) is G4. A G5 region spans residues 362–364 (SAL).

This sequence belongs to the TRAFAC class translation factor GTPase superfamily. Classic translation factor GTPase family. IF-2 subfamily.

It localises to the cytoplasm. In terms of biological role, one of the essential components for the initiation of protein synthesis. Protects formylmethionyl-tRNA from spontaneous hydrolysis and promotes its binding to the 30S ribosomal subunits. Also involved in the hydrolysis of GTP during the formation of the 70S ribosomal complex. This chain is Translation initiation factor IF-2, found in Bacillus licheniformis (strain ATCC 14580 / DSM 13 / JCM 2505 / CCUG 7422 / NBRC 12200 / NCIMB 9375 / NCTC 10341 / NRRL NRS-1264 / Gibson 46).